A 258-amino-acid chain; its full sequence is L-2,3-butanediol dehydrogenase (258 aa).

Residues 12–14, aspartate 33, glutamine 37, 61–62, asparagine 88, tyrosine 154, lysine 158, and 184–189 contribute to the NAD(+) site; these read QGI, DV, and PGIVGT. Tyrosine 154 serves as the catalytic Proton acceptor.

It belongs to the short-chain dehydrogenases/reductases (SDR) family. In terms of assembly, homotetramer.

It catalyses the reaction (S,S)-butane-2,3-diol + NAD(+) = (S)-acetoin + NADH + H(+). It carries out the reaction (S)-acetoin + NAD(+) = diacetyl + NADH + H(+). Its activity is regulated as follows. Slightly activated by Ba(2+), Ca(2+), Mn(2+), Mg(2+), and Co(2+), while Hg(2+) and Cu(2+) cause marked inhibition of the activity. Ni(2+), Zn(2+) and Cd(2+) have no effect on the catalytic activity. Is also slightly inhibited by lactate, pyruvate, succinate, acetate and formate. Catalyzes the reversible reduction of (S)-acetoin to (S,S)-butane-2,3-diol (L-BD) in the presence of NADH. To a lesser extent, can also catalyze the irreversible reduction of diacetyl to (S)-acetoin. Cannot oxidize meso-BD, D-BD, 2-butanol, 1,2-propanediol, ethanol, acetol, 1,2-butanediol, 1,3-butanediol, n-butanol, and n-propanol. Cannot reduce (R)-acetoin, acetol, dihydroxyacetone and 2,4-pentanedione. The chain is L-2,3-butanediol dehydrogenase from Corynebacterium glutamicum (Brevibacterium saccharolyticum).